The following is a 442-amino-acid chain: Chromosomal replication initiator protein DnaA (442 aa).

The segment at 1–75 (MDAWPRCLER…GNGEVALAVG (75 aa)) is domain I, interacts with DnaA modulators. The interval 75–104 (GSRPRAPEPLPAPQAVASAPAAAPIVPFAG) is domain II. The tract at residues 105 to 322 (NLDSHYTFAN…GALNTLVARA (218 aa)) is domain III, AAA+ region. 4 residues coordinate ATP: Gly150, Gly152, Lys153, and Thr154. Positions 323–442 (NFTGRSITVE…WEKLIRKLSE (120 aa)) are domain IV, binds dsDNA.

The protein belongs to the DnaA family. As to quaternary structure, oligomerizes as a right-handed, spiral filament on DNA at oriC.

The protein resides in the cytoplasm. Its function is as follows. Plays an essential role in the initiation and regulation of chromosomal replication. ATP-DnaA binds to the origin of replication (oriC) to initiate formation of the DNA replication initiation complex once per cell cycle. Binds the DnaA box (a 9 base pair repeat at the origin) and separates the double-stranded (ds)DNA. Forms a right-handed helical filament on oriC DNA; dsDNA binds to the exterior of the filament while single-stranded (ss)DNA is stabiized in the filament's interior. The ATP-DnaA-oriC complex binds and stabilizes one strand of the AT-rich DNA unwinding element (DUE), permitting loading of DNA polymerase. After initiation quickly degrades to an ADP-DnaA complex that is not apt for DNA replication. Binds acidic phospholipids. The protein is Chromosomal replication initiator protein DnaA of Xanthomonas campestris pv. campestris (strain B100).